A 143-amino-acid chain; its full sequence is Large ribosomal subunit protein uL11 (143 aa).

It belongs to the universal ribosomal protein uL11 family. As to quaternary structure, part of the ribosomal stalk of the 50S ribosomal subunit. Interacts with L10 and the large rRNA to form the base of the stalk. L10 forms an elongated spine to which L12 dimers bind in a sequential fashion forming a multimeric L10(L12)X complex. Post-translationally, one or more lysine residues are methylated.

In terms of biological role, forms part of the ribosomal stalk which helps the ribosome interact with GTP-bound translation factors. The polypeptide is Large ribosomal subunit protein uL11 (Rhizobium etli (strain CIAT 652)).